The chain runs to 298 residues: tRNA (guanine(9)-N1)-methyltransferase (298 aa).

A compositionally biased stretch (polar residues) spans 1–10; the sequence is MSDTSENSNA. The interval 1–44 is disordered; the sequence is MSDTSENSNAEIPADTSDVKDKPKPIVRAPQFPPPPEGISKSQW. An SAM-dependent MTase TRM10-type domain is found at 96–285; that stretch reads PPKVNLNQSD…SVLPPRKLEV (190 aa). S-adenosyl-L-methionine-binding positions include 192–193, Gly212, 216–220, Cys224, Leu238, and 250–252; these read LT, DKNRH, and KVL. Catalysis depends on Asp216, which acts as the Proton acceptor.

Belongs to the class IV-like SAM-binding methyltransferase superfamily. TRM10 family. As to quaternary structure, monomer.

Its subcellular location is the cytoplasm. The protein resides in the nucleus. It catalyses the reaction guanosine(9) in tRNA + S-adenosyl-L-methionine = N(1)-methylguanosine(9) in tRNA + S-adenosyl-L-homocysteine + H(+). Its function is as follows. S-adenosyl-L-methionine-dependent guanine N(1)-methyltransferase that catalyzes the formation of N(1)-methylguanine at position 9 (m1G9) in cytoplasmic tRNA. The sequence is that of tRNA (guanine(9)-N1)-methyltransferase from Kluyveromyces lactis (strain ATCC 8585 / CBS 2359 / DSM 70799 / NBRC 1267 / NRRL Y-1140 / WM37) (Yeast).